A 224-amino-acid chain; its full sequence is Octanoyltransferase (224 aa).

The region spanning 38–213 is the BPL/LPL catalytic domain; the sequence is SATVDELWWV…YLVRRLGYSA (176 aa). Substrate is bound by residues 77–84, 144–146, and 157–159; these read RGGQVTYH, SLG, and GLS. Cys-175 serves as the catalytic Acyl-thioester intermediate.

Belongs to the LipB family.

The protein localises to the cytoplasm. It carries out the reaction octanoyl-[ACP] + L-lysyl-[protein] = N(6)-octanoyl-L-lysyl-[protein] + holo-[ACP] + H(+). The protein operates within protein modification; protein lipoylation via endogenous pathway; protein N(6)-(lipoyl)lysine from octanoyl-[acyl-carrier-protein]: step 1/2. Catalyzes the transfer of endogenously produced octanoic acid from octanoyl-acyl-carrier-protein onto the lipoyl domains of lipoate-dependent enzymes. Lipoyl-ACP can also act as a substrate although octanoyl-ACP is likely to be the physiological substrate. The chain is Octanoyltransferase from Nitrosococcus oceani (strain ATCC 19707 / BCRC 17464 / JCM 30415 / NCIMB 11848 / C-107).